Here is a 280-residue protein sequence, read N- to C-terminus: Phosphatidylinositol N-acetylglucosaminyltransferase GPI2 subunit (280 aa).

The Cytoplasmic portion of the chain corresponds to 1–53 (MTRSPWKRLLWLKQEYPDNYTDPSFIELRARQKAESNQKSDRKLSEAARAQIR). A helical transmembrane segment spans residues 54–74 (LDFISFYQTILNTSFIYITFT). Residue Y75 is a topological domain, extracellular. A helical membrane pass occupies residues 76-96 (IYYYGFDPIPPTIFLSFITLI). Topologically, residues 97–108 (ISRTKVDPLLSS) are cytoplasmic. Residues 109–129 (FMDVKSSLIITFAMLTLSPVL) traverse the membrane as a helical segment. The Extracellular portion of the chain corresponds to 130–135 (KSLSKT). Residues 136–156 (TASDSIWTLSFWLTLWYIFVI) traverse the membrane as a helical segment. The Cytoplasmic segment spans residues 157 to 189 (SSTKSKDKPSNLSTNILVALVAVLSSRLSTTID). Residues 190–210 (VFCFLLICIQLNIILPTYLSV) form a helical membrane-spanning segment. Topologically, residues 211-220 (TNKVVPIISN) are extracellular. A helical transmembrane segment spans residues 221–241 (IIVYSFLNVALGWIYMLLIFF). Residues 242–280 (ASVFYITVLPKWFIYWKINYHKRDNDLLSTWDARTPILD) are Cytoplasmic-facing.

It belongs to the PIGC family. As to quaternary structure, component of the phosphatidylinositol N-acetylglucosaminyltransferase (GPI-GlcNAc transferase) complex composed of at least GPI1, GPI2, GPI3, GPI15, GPI19 and ERI1. Interacts with ERI1.

Its subcellular location is the membrane. It catalyses the reaction a 1,2-diacyl-sn-glycero-3-phospho-(1D-myo-inositol) + UDP-N-acetyl-alpha-D-glucosamine = a 6-(N-acetyl-alpha-D-glucosaminyl)-1-(1,2-diacyl-sn-glycero-3-phospho)-1D-myo-inositol + UDP + H(+). It participates in glycolipid biosynthesis; glycosylphosphatidylinositol-anchor biosynthesis. Functionally, part of the complex catalyzing the transfer of N-acetylglucosamine from UDP-N-acetylglucosamine to phosphatidylinositol, the first step of GPI biosynthesis. The polypeptide is Phosphatidylinositol N-acetylglucosaminyltransferase GPI2 subunit (GPI2) (Saccharomyces cerevisiae (strain ATCC 204508 / S288c) (Baker's yeast)).